Consider the following 215-residue polypeptide: Octanoyltransferase (215 aa).

Residues 42-215 (QNTPDEIWLL…AEKLKARLKQ (174 aa)) form the BPL/LPL catalytic domain. Substrate is bound by residues 81–88 (RGGQITYH), 148–150 (ALG), and 161–163 (GLA). Catalysis depends on Cys179, which acts as the Acyl-thioester intermediate.

The protein belongs to the LipB family.

Its subcellular location is the cytoplasm. It carries out the reaction octanoyl-[ACP] + L-lysyl-[protein] = N(6)-octanoyl-L-lysyl-[protein] + holo-[ACP] + H(+). It participates in protein modification; protein lipoylation via endogenous pathway; protein N(6)-(lipoyl)lysine from octanoyl-[acyl-carrier-protein]: step 1/2. In terms of biological role, catalyzes the transfer of endogenously produced octanoic acid from octanoyl-acyl-carrier-protein onto the lipoyl domains of lipoate-dependent enzymes. Lipoyl-ACP can also act as a substrate although octanoyl-ACP is likely to be the physiological substrate. In Nitrosospira multiformis (strain ATCC 25196 / NCIMB 11849 / C 71), this protein is Octanoyltransferase.